The chain runs to 416 residues: MELRVGNKYRLGRKIGSGSFGDIYLGANIASGEEVAIKLECVKTKHPQLHIESKFYKMMQGGVGIPSIKWCGAEGDYNVMVMELLGPSLEDLFNFCSRKFSLKTVLLLADQMISRIEYIHSKNFIHRDVKPDNFLMGLGKKGNLVYIIDFGLAKKYRDARTHQHIPYRENKNLTGTARYASINTHLGIEQSRRDDLESLGYVLMYFNLGSLPWQGLKAATKRQKYERISEKKMSTPIEVLCKGYPSEFSTYLNFCRSLRFDDKPDYSYLRQLFRNLFHRQGFSYDYVFDWNMLKFGAARNPEDVDRERREHEREERMGQLRGSATRALPPGPPTGATANRLRSAAEPVASTPASRIQQTGNTSPRAISRADRERKVSMRLHRGAPANVSSSDLTGRQEVSRLAASQTSVPFDHLGK.

In terms of domain architecture, Protein kinase spans 9–277; that stretch reads YRLGRKIGSG…YLRQLFRNLF (269 aa). ATP is bound by residues 15-23 and Lys38; that span reads IGSGSFGDI. Asp128 acts as the Proton acceptor in catalysis. Positions 301–318 are enriched in basic and acidic residues; the sequence is PEDVDRERREHEREERMG. The interval 301-416 is disordered; the sequence is PEDVDRERRE…TSVPFDHLGK (116 aa). Residues Ser343 and Ser354 each carry the phosphoserine modification. Residues 351–365 show a composition bias toward polar residues; that stretch reads TPASRIQQTGNTSPR. Phosphothreonine is present on Thr362. A Phosphoserine modification is found at Ser363. Arg382 bears the Omega-N-methylarginine mark. Phosphoserine is present on residues Ser389, Ser405, and Ser408.

It belongs to the protein kinase superfamily. CK1 Ser/Thr protein kinase family. Casein kinase I subfamily. In terms of assembly, monomer. Component of the circadian core oscillator, which includes the CRY proteins, CLOCK, or NPAS2, ARTNL/BMAL1 or ARTNL2/BMAL2, CSNK1D and/or CSNK1E, TIMELESS and the PER proteins. Interacts with ANKRD6. Interacts with PER1. Interacts with DBNDD2, LRP5, LRP6 and SOCS3. Interacts with SNAI1 (via zinc fingers). Interacts with DDX3X; this interaction greatly enhances CSNK1E affinity for ATP and DVL2 phosphorylation, but inhibits DDX3X ATPase/helicase activity. In the presence of RNA, the interaction is decreased. Interacts with FAM83A, FAM83B, FAM83E and FAM83H (via DUF1669). Post-translationally, autophosphorylated. Partially dephosphorylated by PPP5C. May be dephosphorylated by PP1. As to expression, expressed in all tissues examined, including brain, heart, lung, liver, pancreas, kidney, placenta and skeletal muscle. Expressed in monocytes and lymphocytes but not in granulocytes.

The protein resides in the cytoplasm. Its subcellular location is the nucleus. It carries out the reaction L-seryl-[protein] + ATP = O-phospho-L-seryl-[protein] + ADP + H(+). The catalysed reaction is L-threonyl-[protein] + ATP = O-phospho-L-threonyl-[protein] + ADP + H(+). Its activity is regulated as follows. Phosphorylation leads to a decrease in the catalytic activity. In terms of biological role, casein kinases are operationally defined by their preferential utilization of acidic proteins such as caseins as substrates. Participates in Wnt signaling. Phosphorylates DVL1. Phosphorylates DVL2. Phosphorylates NEDD9/HEF1. Central component of the circadian clock. In balance with PP1, determines the circadian period length, through the regulation of the speed and rhythmicity of PER1 and PER2 phosphorylation. Controls PER1 and PER2 nuclear transport and degradation. Inhibits cytokine-induced granuloytic differentiation. The protein is Casein kinase I isoform epsilon (Csnk1e) of Mus musculus (Mouse).